A 181-amino-acid chain; its full sequence is Adenylate kinase (181 aa).

Residue G10 to T15 coordinates ATP. The NMP stretch occupies residues S30–V59. Residues T31, R36, D57–V59, G85–R88, and Q92 each bind AMP. Residues G126 to D132 are LID. R127 lines the ATP pocket. The AMP site is built by R129 and R140. G166 provides a ligand contact to ATP.

Belongs to the adenylate kinase family. Monomer.

Its subcellular location is the cytoplasm. The enzyme catalyses AMP + ATP = 2 ADP. It functions in the pathway purine metabolism; AMP biosynthesis via salvage pathway; AMP from ADP: step 1/1. In terms of biological role, catalyzes the reversible transfer of the terminal phosphate group between ATP and AMP. Plays an important role in cellular energy homeostasis and in adenine nucleotide metabolism. This is Adenylate kinase from Mycobacterium ulcerans (strain Agy99).